The following is an 80-amino-acid chain: Small ribosomal subunit protein bS16 (80 aa).

It belongs to the bacterial ribosomal protein bS16 family.

This chain is Small ribosomal subunit protein bS16, found in Hydrogenovibrio crunogenus (strain DSM 25203 / XCL-2) (Thiomicrospira crunogena).